A 395-amino-acid chain; its full sequence is S-adenosylmethionine synthase (395 aa).

Residue His-16 participates in ATP binding. A Mg(2+)-binding site is contributed by Asp-18. K(+) is bound at residue Glu-44. Residues Glu-57 and Gln-100 each contribute to the L-methionine site. The tract at residues 100 to 110 (QSPDIAQGVDR) is flexible loop. Residues 167–169 (DAK), 233–234 (RF), Asp-242, 248–249 (RK), Ala-265, and Lys-269 contribute to the ATP site. Asp-242 is a binding site for L-methionine. Position 273 (Lys-273) interacts with L-methionine.

It belongs to the AdoMet synthase family. As to quaternary structure, homotetramer; dimer of dimers. Mg(2+) is required as a cofactor. Requires K(+) as cofactor.

The protein localises to the cytoplasm. It catalyses the reaction L-methionine + ATP + H2O = S-adenosyl-L-methionine + phosphate + diphosphate. It participates in amino-acid biosynthesis; S-adenosyl-L-methionine biosynthesis; S-adenosyl-L-methionine from L-methionine: step 1/1. Catalyzes the formation of S-adenosylmethionine (AdoMet) from methionine and ATP. The overall synthetic reaction is composed of two sequential steps, AdoMet formation and the subsequent tripolyphosphate hydrolysis which occurs prior to release of AdoMet from the enzyme. The polypeptide is S-adenosylmethionine synthase (Burkholderia thailandensis (strain ATCC 700388 / DSM 13276 / CCUG 48851 / CIP 106301 / E264)).